The primary structure comprises 440 residues: Proline--tRNA ligase (440 aa).

It belongs to the class-II aminoacyl-tRNA synthetase family. ProS type 2 subfamily. Homodimer.

The protein resides in the cytoplasm. The enzyme catalyses tRNA(Pro) + L-proline + ATP = L-prolyl-tRNA(Pro) + AMP + diphosphate. Functionally, catalyzes the attachment of proline to tRNA(Pro) in a two-step reaction: proline is first activated by ATP to form Pro-AMP and then transferred to the acceptor end of tRNA(Pro). The chain is Proline--tRNA ligase from Xanthobacter autotrophicus (strain ATCC BAA-1158 / Py2).